We begin with the raw amino-acid sequence, 182 residues long: uncharacterized protein (182 aa).

Residues Leu-17–Ala-34 form a helical membrane-spanning segment. TPR repeat units lie at residues Val-89–Asn-122 and Leu-123–Asn-156.

It localises to the membrane. This is an uncharacterized protein from Sinorhizobium fredii (strain NBRC 101917 / NGR234).